Reading from the N-terminus, the 398-residue chain is Acetate kinase (398 aa).

Asparagine 7 contacts Mg(2+). Lysine 14 lines the ATP pocket. Residue arginine 92 coordinates substrate. The active-site Proton donor/acceptor is aspartate 149. ATP contacts are provided by residues 209-213 (HLGNG), 284-286 (DFR), and 332-336 (GVGEN). Residue glutamate 385 coordinates Mg(2+).

It belongs to the acetokinase family. As to quaternary structure, homodimer. The cofactor is Mg(2+). Requires Mn(2+) as cofactor.

Its subcellular location is the cytoplasm. The catalysed reaction is acetate + ATP = acetyl phosphate + ADP. It participates in metabolic intermediate biosynthesis; acetyl-CoA biosynthesis; acetyl-CoA from acetate: step 1/2. Catalyzes the formation of acetyl phosphate from acetate and ATP. Can also catalyze the reverse reaction. The protein is Acetate kinase of Clostridioides difficile (strain 630) (Peptoclostridium difficile).